A 342-amino-acid polypeptide reads, in one-letter code: MQFIDRAEIEVEGGKGGDGIVAFRREKYVPAGGPAGGNGGKGGSVIFVATQNLQTLLDFQYSRYFKADDGKRGGPNNCTGANGSDRIIKVPCGTVVYDLDSEEIIGDLVTPEQTLIVAAGGKGGLGNRHFLSNNNRAPEYALPGLEGEKRHLRLELKLLAEVGIIGLPNAGKSTLISAVSSARPKIADYPFTTLIPNLGVVRKPTGDGTVFADIPGLIEGAHLGIGLGHEFLRHIERTRLLIHLVSLTSEDPIADYQIIQGELAAYGRGLEKRSQILVFNKIDAVDEETIDNYQKQFAKITNAEILTISAVTGAGLTTLLAKVWQQLEQLERVEDETPSLFS.

Residues 1–159 (MQFIDRAEIE…RHLRLELKLL (159 aa)) form the Obg domain. In terms of domain architecture, OBG-type G spans 160–328 (AEVGIIGLPN…LLAKVWQQLE (169 aa)). Residues 166–173 (GLPNAGKS), 191–195 (FTTLI), 213–216 (DIPG), 280–283 (NKID), and 309–311 (SAV) each bind GTP. Mg(2+)-binding residues include Ser173 and Thr193.

This sequence belongs to the TRAFAC class OBG-HflX-like GTPase superfamily. OBG GTPase family. As to quaternary structure, monomer. The cofactor is Mg(2+).

The protein localises to the cytoplasm. An essential GTPase which binds GTP, GDP and possibly (p)ppGpp with moderate affinity, with high nucleotide exchange rates and a fairly low GTP hydrolysis rate. Plays a role in control of the cell cycle, stress response, ribosome biogenesis and in those bacteria that undergo differentiation, in morphogenesis control. The sequence is that of GTPase Obg from Microcystis aeruginosa (strain NIES-843 / IAM M-2473).